Consider the following 318-residue polypeptide: Biotin synthase (318 aa).

Residues 40–260 (DDIQKASLLS…VATARIIMPL (221 aa)) form the Radical SAM core domain. Positions 55, 59, and 62 each coordinate [4Fe-4S] cluster. [2Fe-2S] cluster-binding residues include Cys100, Cys132, Cys192, and Arg264.

It belongs to the radical SAM superfamily. Biotin synthase family. In terms of assembly, homodimer. Requires [4Fe-4S] cluster as cofactor. [2Fe-2S] cluster is required as a cofactor.

The catalysed reaction is (4R,5S)-dethiobiotin + (sulfur carrier)-SH + 2 reduced [2Fe-2S]-[ferredoxin] + 2 S-adenosyl-L-methionine = (sulfur carrier)-H + biotin + 2 5'-deoxyadenosine + 2 L-methionine + 2 oxidized [2Fe-2S]-[ferredoxin]. Its pathway is cofactor biosynthesis; biotin biosynthesis; biotin from 7,8-diaminononanoate: step 2/2. Catalyzes the conversion of dethiobiotin (DTB) to biotin by the insertion of a sulfur atom into dethiobiotin via a radical-based mechanism. The protein is Biotin synthase of Ruegeria pomeroyi (strain ATCC 700808 / DSM 15171 / DSS-3) (Silicibacter pomeroyi).